The primary structure comprises 115 residues: MYQAKRERMIGKKILGERYVTVSEAAEIMYNRAQIGELSYEQGCALDYLQKFAKLDKEEAKKLVEELISLGIDEKTAVKIADILPEDLDDLRAIYYKRELPENAEEILEIVRKYI.

It belongs to the eukaryotic RPB4 RNA polymerase subunit family. Part of the RNA polymerase complex. Forms a stalk with Rpo7 that extends from the main structure.

Its subcellular location is the cytoplasm. It catalyses the reaction RNA(n) + a ribonucleoside 5'-triphosphate = RNA(n+1) + diphosphate. Functionally, DNA-dependent RNA polymerase (RNAP) catalyzes the transcription of DNA into RNA using the four ribonucleoside triphosphates as substrates. This subunit is less well bound than the others. This Methanocaldococcus jannaschii (strain ATCC 43067 / DSM 2661 / JAL-1 / JCM 10045 / NBRC 100440) (Methanococcus jannaschii) protein is DNA-directed RNA polymerase subunit Rpo4.